The following is a 105-amino-acid chain: Integration host factor subunit beta (105 aa).

It belongs to the bacterial histone-like protein family. As to quaternary structure, heterodimer of an alpha and a beta chain.

Functionally, this protein is one of the two subunits of integration host factor, a specific DNA-binding protein that functions in genetic recombination as well as in transcriptional and translational control. The sequence is that of Integration host factor subunit beta from Nitrosomonas europaea (strain ATCC 19718 / CIP 103999 / KCTC 2705 / NBRC 14298).